We begin with the raw amino-acid sequence, 408 residues long: Aminopeptidase T (408 aa).

Glutamate 250, glutamate 316, glutamate 340, histidine 345, histidine 376, and aspartate 378 together coordinate a divalent metal cation.

It belongs to the peptidase M29 family. As to quaternary structure, homodimer. Requires Co(2+) as cofactor. Zn(2+) serves as cofactor. The cofactor is Mg(2+).

Functionally, metal-dependent exopeptidase. The polypeptide is Aminopeptidase T (Thermus thermophilus (strain ATCC 27634 / DSM 579 / HB8)).